Reading from the N-terminus, the 349-residue chain is MTAASMGPVRVAFVVLLALCSRPAVGQNCSGPCRCPDEPAPRCPAGVSLVLDGCGCCRVCAKQLGELCTERDPCDPHKGLFCHFGSPANRKIGVCTAKDGAPCIFGGTVYRSGESFQSSCKYQCTCLDGAVGCMPLCSMDVRLPSPDCPFPRRVKLPGKCCEEWVCDEPKDQTVVGPALAAYRLEDTFGPDPTMIRANCLVQTTEWSACSKTCGMGISTRVTNDNASCRLEKQSRLCMVRPCEADLEENIKKGKKCIRTPKISKPIKFELSGCTSMKTYRAKFCGVCTDGRCCTPHRTTTLPVEFKCPDGEVMKKNMMFIKTCACHYNCPGDNDIFESLYYRKMYGDMA.

Positions 1–26 are cleaved as a signal peptide; it reads MTAASMGPVRVAFVVLLALCSRPAVG. The IGFBP N-terminal domain occupies 27-98; that stretch reads QNCSGPCRCP…NRKIGVCTAK (72 aa). The N-linked (GlcNAc...) asparagine glycan is linked to N28. Cystine bridges form between C29–C54, C33–C56, C35–C57, C43–C60, C68–C82, and C74–C95. Residues 101-167 enclose the VWFC domain; sequence APCIFGGTVY…GKCCEEWVCD (67 aa). A TSP type-1 domain is found at 198–243; the sequence is NCLVQTTEWSACSKTCGMGISTRVTNDNASCRLEKQSRLCMVRPCE. N-linked (GlcNAc...) asparagine glycosylation occurs at N225. Positions 247-349 are heparin-binding; sequence EENIKKGKKC…YYRKMYGDMA (103 aa). Disulfide bonds link C256–C293, C273–C307, C284–C323, C287–C325, and C292–C329. The CTCK domain occupies 256-330; sequence CIRTPKISKP…KTCACHYNCP (75 aa).

The protein belongs to the CCN family. Monomer. Interacts with TSKU. As to expression, expressed in bone marrow and thymic cells. Also expressed one of two Wilms tumors tested.

Its subcellular location is the secreted. The protein localises to the extracellular space. It localises to the extracellular matrix. In terms of biological role, major connective tissue mitoattractant secreted by vascular endothelial cells. Promotes proliferation and differentiation of chondrocytes. Is involved in the stimulation of osteoblast differentiation and has a critical role in osteogenesis. Mediates heparin- and divalent cation-dependent cell adhesion in many cell types including fibroblasts, myofibroblasts, endothelial and epithelial cells. Enhances fibroblast growth factor-induced DNA synthesis. The sequence is that of CCN family member 2 from Homo sapiens (Human).